The primary structure comprises 410 residues: Platelet-activating factor acetylhydrolase IB subunit beta (410 aa).

Positions 1–38 (MVLSQRQRDELNRAIADYLRSNGYEEAYSVFKKEAELD) are required for self-association and interaction with PAFAH1B2 and PAFAH1B3. The segment at 1–66 (MVLSQRQRDE…SVIRLQKKVM (66 aa)) is interaction with NDE1. Residues 1–102 (MVLSQRQRDE…EWIPRPPEKY (102 aa)) form an interaction with NDEL1 region. One can recognise a LisH domain in the interval 7 to 39 (QRDELNRAIADYLRSNGYEEAYSVFKKEAELDM). An N6-acetyllysine modification is found at K53. A coiled-coil region spans residues 56 to 82 (TSVIRLQKKVMELESKLNEAKEEFTSG). An interaction with dynein and dynactin region spans residues 83-410 (GPLGQKRDPK…DQTVKVWECR (328 aa)). WD repeat units follow at residues 106-147 (GHRS…RTLK), 148-187 (GHTDSVQDISFDHSGKLLASCSADMTIKLWDFQGFECIRT), 190-229 (GHDHNVSSVAIMPNGDHIVSASRDKTIKMWEVQTGYCVKT), 232-271 (GHREWVRMVRPNQDGTLIASCSNDQTVRVWVVATKECKAE), 274-333 (EHEH…CLMT), 336-377 (GHDN…KTLN), and 378-410 (AHEHFVTSLDFHKTAPYVVTGSVDQTVKVWECR). S109 carries the phosphoserine modification. The interaction with DCX stretch occupies residues 367–409 (YKNKRCMKTLNAHEHFVTSLDFHKTAPYVVTGSVDQTVKVWEC). The interaction with NDEL1 stretch occupies residues 388-410 (FHKTAPYVVTGSVDQTVKVWECR).

Belongs to the WD repeat LIS1/nudF family. In terms of assembly, can self-associate. Component of the cytosolic PAF-AH (I) heterotetrameric enzyme, which is composed of PAFAH1B1 (beta), PAFAH1B2 (alpha2) and PAFAH1B3 (alpha1) subunits. The catalytic activity of the enzyme resides in the alpha1 (PAFAH1B3) and alpha2 (PAFAH1B2) subunits, whereas the beta subunit (PAFAH1B1) has regulatory activity. Trimer formation is not essential for the catalytic activity. Interacts with the catalytic dimer of PAF-AH (I) heterotetrameric enzyme: interacts with PAFAH1B2 homodimer (alpha2/alpha2 homodimer), PAFAH1B3 homodimer (alpha1/alpha1 homodimer) and PAFAH1B2-PAFAH1B3 heterodimer (alpha2/alpha1 heterodimer). Interacts with DCX, dynein, dynactin, IQGAP1, KATNB1, NDE1, NDEL1, NUDC and RSN. Interacts with DISC1, and this interaction is enhanced by NDEL1. Interacts with DAB1 when DAB1 is phosphorylated in response to RELN/reelin signaling. Interacts with INTS13. Interacts with DCDC1.

It is found in the cytoplasm. It localises to the cytoskeleton. The protein resides in the microtubule organizing center. Its subcellular location is the centrosome. The protein localises to the spindle. It is found in the nucleus membrane. In terms of biological role, regulatory subunit (beta subunit) of the cytosolic type I platelet-activating factor (PAF) acetylhydrolase (PAF-AH (I)), an enzyme that catalyzes the hydrolyze of the acetyl group at the sn-2 position of PAF and its analogs and participates in PAF inactivation. Regulates the PAF-AH (I) activity in a catalytic dimer composition-dependent manner. Positively regulates the activity of the minus-end directed microtubule motor protein dynein. May enhance dynein-mediated microtubule sliding by targeting dynein to the microtubule plus end. Required for several dynein- and microtubule-dependent processes such as the maintenance of Golgi integrity, the peripheral transport of microtubule fragments and the coupling of the nucleus and centrosome. Required during brain development for the proliferation of neuronal precursors and the migration of newly formed neurons from the ventricular/subventricular zone toward the cortical plate. Neuronal migration involves a process called nucleokinesis, whereby migrating cells extend an anterior process into which the nucleus subsequently translocates. During nucleokinesis dynein at the nuclear surface may translocate the nucleus towards the centrosome by exerting force on centrosomal microtubules. Also required for proper activation of Rho GTPases and actin polymerization at the leading edge of locomoting cerebellar neurons and postmigratory hippocampal neurons in response to calcium influx triggered via NMDA receptors. May also play a role in other forms of cell locomotion including the migration of fibroblasts during wound healing. Required for dynein recruitment to microtubule plus ends and BICD2-bound cargos. May modulate the Reelin pathway through interaction of the PAF-AH (I) catalytic dimer with VLDLR. This Felis catus (Cat) protein is Platelet-activating factor acetylhydrolase IB subunit beta.